A 358-amino-acid chain; its full sequence is 3-dehydroquinate synthase (358 aa).

NAD(+) is bound by residues glycine 72–lysine 77, glycine 106–aspartate 110, serine 130–threonine 131, lysine 143, and lysine 151. Zn(2+) contacts are provided by glutamate 184, histidine 245, and histidine 261.

This sequence belongs to the sugar phosphate cyclases superfamily. Dehydroquinate synthase family. NAD(+) is required as a cofactor. Requires Co(2+) as cofactor. It depends on Zn(2+) as a cofactor.

Its subcellular location is the cytoplasm. The catalysed reaction is 7-phospho-2-dehydro-3-deoxy-D-arabino-heptonate = 3-dehydroquinate + phosphate. It participates in metabolic intermediate biosynthesis; chorismate biosynthesis; chorismate from D-erythrose 4-phosphate and phosphoenolpyruvate: step 2/7. In terms of biological role, catalyzes the conversion of 3-deoxy-D-arabino-heptulosonate 7-phosphate (DAHP) to dehydroquinate (DHQ). The protein is 3-dehydroquinate synthase (aroB) of Aeropyrum pernix (strain ATCC 700893 / DSM 11879 / JCM 9820 / NBRC 100138 / K1).